The sequence spans 210 residues: Large ribosomal subunit protein uL3 (210 aa).

The protein belongs to the universal ribosomal protein uL3 family. As to quaternary structure, part of the 50S ribosomal subunit. Forms a cluster with proteins L14 and L19.

One of the primary rRNA binding proteins, it binds directly near the 3'-end of the 23S rRNA, where it nucleates assembly of the 50S subunit. This is Large ribosomal subunit protein uL3 from Natranaerobius thermophilus (strain ATCC BAA-1301 / DSM 18059 / JW/NM-WN-LF).